The chain runs to 606 residues: Zinc finger protein 652 (606 aa).

Phosphoserine is present on Ser-57. The segment covering 71 to 97 (HLHETEEQPYFRETRAVSDVHAVKEDR) has biased composition (basic and acidic residues). Disordered stretches follow at residues 71-113 (HLHE…VSYK) and 130-235 (VSKG…APVQ). Positions 98 to 109 (ENSDDTEEEEEE) are enriched in acidic residues. The residue at position 100 (Ser-100) is a Phosphoserine. Thr-103 carries the phosphothreonine modification. The segment covering 137–149 (VSSQSKETPVLKT) has biased composition (polar residues). Positions 152 to 170 (EEEEEESEEEATDDSNDYG) are enriched in acidic residues. A compositionally biased stretch (basic and acidic residues) spans 171-183 (ENEKQKKKEKIVE). Residues 184-209 (KVSVTQRRTRRAASVAAATTSPTPRT) show a composition bias toward low complexity. A phosphoserine mark is found at Ser-197 and Ser-204. The C2H2-type 1 zinc-finger motif lies at 245 to 268 (LTCEKCPRVFNTRWYLEKHMNVTH). The segment at 272-294 (QICDKCGKKFVLESELSLHQQTD) adopts a C2H2-type 2; degenerate zinc-finger fold. 6 consecutive C2H2-type zinc fingers follow at residues 299–322 (IQCV…KIVH), 329–351 (FSCE…MVAH), 357–379 (FTCE…SLQH), 385–407 (FRCE…MSIH), 413–435 (FMCQ…MKTH), and 441–463 (FICE…RRTH). The C2H2-type 9; degenerate zinc finger occupies 469–492 (YPCDVCGQRFRFSNMLKAHKEKCF). Residues 498–606 (VNVPPAVQIP…AEKNSSAQHH (109 aa)) form a mediates interaction with CBFA2T3 region.

The protein belongs to the krueppel C2H2-type zinc-finger protein family. In terms of assembly, interacts with CBFA2T3. As to expression, widely expressed with higher expression in breast, prostate, vulva and pancreas.

The protein resides in the nucleus. Functions as a transcriptional repressor. The polypeptide is Zinc finger protein 652 (ZNF652) (Homo sapiens (Human)).